A 351-amino-acid chain; its full sequence is Protein-glutamate methylesterase/protein-glutamine glutaminase 2 (351 aa).

The region spanning 4 to 121 is the Response regulatory domain; that stretch reads KVLVVDDSAL…PQDFNEYQDL (118 aa). Asp55 is subject to 4-aspartylphosphate. Residues 156–348 form the CheB-type methylesterase domain; the sequence is RVINTQLVAI…DKMLNYLASL (193 aa). Active-site residues include Ser168, His194, and Asp290.

Belongs to the CheB family. In terms of processing, phosphorylated by CheA. Phosphorylation of the N-terminal regulatory domain activates the methylesterase activity.

It localises to the cytoplasm. The catalysed reaction is [protein]-L-glutamate 5-O-methyl ester + H2O = L-glutamyl-[protein] + methanol + H(+). It catalyses the reaction L-glutaminyl-[protein] + H2O = L-glutamyl-[protein] + NH4(+). Its function is as follows. Involved in chemotaxis. Part of a chemotaxis signal transduction system that modulates chemotaxis in response to various stimuli. Catalyzes the demethylation of specific methylglutamate residues introduced into the chemoreceptors (methyl-accepting chemotaxis proteins or MCP) by CheR. Also mediates the irreversible deamidation of specific glutamine residues to glutamic acid. The polypeptide is Protein-glutamate methylesterase/protein-glutamine glutaminase 2 (Shewanella sp. (strain MR-7)).